A 78-amino-acid polypeptide reads, in one-letter code: HssA/B-like protein 30 (78 aa).

The interval Met1–Gly32 is disordered.

This sequence belongs to the hssA/B family.

In Dictyostelium discoideum (Social amoeba), this protein is HssA/B-like protein 30 (hssl30).